Here is a 1250-residue protein sequence, read N- to C-terminus: DNA-directed RNA polymerase subunit beta (1250 aa).

The interval 1139–1226 (GGAELAKPAP…DLFDEGDEDL (88 aa)) is disordered. Acidic residues-rich tracts occupy residues 1155-1183 (ESGE…DPEE) and 1207-1226 (ADDD…DEDL).

The protein belongs to the RNA polymerase beta chain family. As to quaternary structure, the RNAP catalytic core consists of 2 alpha, 1 beta, 1 beta' and 1 omega subunit. When a sigma factor is associated with the core the holoenzyme is formed, which can initiate transcription.

It carries out the reaction RNA(n) + a ribonucleoside 5'-triphosphate = RNA(n+1) + diphosphate. DNA-dependent RNA polymerase catalyzes the transcription of DNA into RNA using the four ribonucleoside triphosphates as substrates. The protein is DNA-directed RNA polymerase subunit beta of Symbiobacterium thermophilum (strain DSM 24528 / JCM 14929 / IAM 14863 / T).